Here is a 658-residue protein sequence, read N- to C-terminus: DNA mismatch repair protein MutL (658 aa).

Residues 114-130 are compositionally biased toward basic and acidic residues; sequence RQEDSSHATQVKAEDGK. 2 disordered regions span residues 114-138 and 353-405; these read RQED…TAAA and PMPS…HSLS. Polar residues predominate over residues 361 to 372; that stretch reads ENLFDSASNHPT.

It belongs to the DNA mismatch repair MutL/HexB family.

In terms of biological role, this protein is involved in the repair of mismatches in DNA. It is required for dam-dependent methyl-directed DNA mismatch repair. May act as a 'molecular matchmaker', a protein that promotes the formation of a stable complex between two or more DNA-binding proteins in an ATP-dependent manner without itself being part of a final effector complex. The sequence is that of DNA mismatch repair protein MutL from Neisseria gonorrhoeae (strain NCCP11945).